A 677-amino-acid chain; its full sequence is DNA ligase (677 aa).

NAD(+)-binding positions include 35–39, 84–85, and glutamate 115; these read DAVYD and SL. The active-site N6-AMP-lysine intermediate is the lysine 117. NAD(+) is bound by residues arginine 138, glutamate 177, lysine 296, and lysine 320. The Zn(2+) site is built by cysteine 414, cysteine 417, cysteine 432, and cysteine 437. The BRCT domain maps to 599 to 677; it reads NGILKLNGKT…ETQLLEILEE (79 aa).

It belongs to the NAD-dependent DNA ligase family. LigA subfamily. The cofactor is Mg(2+). Mn(2+) is required as a cofactor.

The enzyme catalyses NAD(+) + (deoxyribonucleotide)n-3'-hydroxyl + 5'-phospho-(deoxyribonucleotide)m = (deoxyribonucleotide)n+m + AMP + beta-nicotinamide D-nucleotide.. In terms of biological role, DNA ligase that catalyzes the formation of phosphodiester linkages between 5'-phosphoryl and 3'-hydroxyl groups in double-stranded DNA using NAD as a coenzyme and as the energy source for the reaction. It is essential for DNA replication and repair of damaged DNA. This is DNA ligase from Nostoc sp. (strain PCC 7120 / SAG 25.82 / UTEX 2576).